The sequence spans 482 residues: E3 ubiquitin-protein ligase makorin-1 (482 aa).

Positions 26 to 38 (ASPTPIPTVTAPS) are enriched in low complexity. The disordered stretch occupies residues 26–52 (ASPTPIPTVTAPSLGAGGGGGGSDGSG). Over residues 40 to 52 (GAGGGGGGSDGSG) the composition is skewed to gly residues. 3 consecutive C3H1-type zinc fingers follow at residues 55 to 82 (WTKQVTCRYFMHGVCKEGDNCRYSHDLS), 84 to 111 (SPYSVVCKYFQRGYCIYGDRCRYEHSKP), and 208 to 235 (ETKKQLCPYAAVGECRYGENCVYLHGDS). The segment at 236-263 (CDMCGLQVLHPMDAAQRSQHIKSCIEAH) is makorin-type Cys-His. An RING-type zinc finger spans residues 281–335 (CGICMEVVYEKANPSERRFGILSNCNHTYCLKCIRKWRSAKQFESKIIKSCPECR). The C3H1-type 4 zinc finger occupies 364-393 (AMSNKACRYFDEGRGSCPFGGNCFYKHAYP).

As to quaternary structure, interacts with p53/TP53 and CDKN1A. Interacts with TERT, modulating telomere length homeostasis. In terms of processing, auto-ubiquitinated; which leads to proteasomal degradation. Ubiquitous.

The enzyme catalyses S-ubiquitinyl-[E2 ubiquitin-conjugating enzyme]-L-cysteine + [acceptor protein]-L-lysine = [E2 ubiquitin-conjugating enzyme]-L-cysteine + N(6)-ubiquitinyl-[acceptor protein]-L-lysine.. It functions in the pathway protein modification; protein ubiquitination. E3 ubiquitin ligase catalyzing the covalent attachment of ubiquitin moieties onto substrate proteins. These substrates include FILIP1, p53/TP53, CDKN1A and TERT. Keeps cells alive by suppressing p53/TP53 under normal conditions, but stimulates apoptosis by repressing CDKN1A under stress conditions. Acts as a negative regulator of telomerase. Has negative and positive effects on RNA polymerase II-dependent transcription. The polypeptide is E3 ubiquitin-protein ligase makorin-1 (MKRN1) (Homo sapiens (Human)).